Here is a 91-residue protein sequence, read N- to C-terminus: Non-specific lipid-transfer protein 1 (91 aa).

Disulfide bonds link C3–C50, C13–C27, C28–C73, and C48–C87.

It belongs to the plant LTP family.

Functionally, plant non-specific lipid-transfer proteins transfer phospholipids as well as galactolipids across membranes. May play a role in wax or cutin deposition in the cell walls of expanding epidermal cells and certain secretory tissues. The protein is Non-specific lipid-transfer protein 1 of Prunus domestica (Garden plum).